The following is a 119-amino-acid chain: Beta-2-microglobulin (119 aa).

The N-terminal stretch at 1 to 20 (MARFVVVALLVQLSLFGLEA) is a signal peptide. Residues 25–114 (PKIQVYSRYP…VTFSTPKTVK (90 aa)) enclose the Ig-like C1-type domain. Cys45 and Cys100 are oxidised to a cystine.

This sequence belongs to the beta-2-microglobulin family. Heterodimer of an alpha chain and a beta chain. Beta-2-microglobulin is the beta-chain of major histocompatibility complex class I molecules.

It localises to the secreted. Component of the class I major histocompatibility complex (MHC). Involved in the presentation of peptide antigens to the immune system. The chain is Beta-2-microglobulin (B2M) from Saguinus imperator (Emperor tamarin).